A 622-amino-acid chain; its full sequence is Probable potassium transport system protein Kup (622 aa).

Transmembrane regions (helical) follow at residues 8-28 (LAVL…TSVL), 50-70 (ILSI…VSLV), 101-121 (VLLL…VITP), 137-157 (PTFT…LFAM), 165-185 (IGKF…LLGV), 213-233 (ITFI…ALYA), 247-267 (WFSV…ALLL), 285-305 (ALIP…QALI), 337-357 (IYMP…VVMF), 366-386 (AYGI…FYVI), 393-413 (PLAL…AFFA), and 419-439 (LFAG…LMIT).

This sequence belongs to the HAK/KUP transporter (TC 2.A.72) family.

It localises to the cell inner membrane. The enzyme catalyses K(+)(in) + H(+)(in) = K(+)(out) + H(+)(out). Functionally, transport of potassium into the cell. Likely operates as a K(+):H(+) symporter. This chain is Probable potassium transport system protein Kup, found in Polaromonas naphthalenivorans (strain CJ2).